Reading from the N-terminus, the 67-residue chain is Bowman-Birk type proteinase inhibitor A6 (67 aa).

Cystine bridges form between cysteine 9–cysteine 66, cysteine 10–cysteine 29, cysteine 13–cysteine 62, cysteine 16–cysteine 27, cysteine 36–cysteine 43, and cysteine 40–cysteine 54.

The protein belongs to the Bowman-Birk serine protease inhibitor family. As to expression, expressed in bulb (at protein level).

Serine protease inhibitor. Strongly inhibits trypsin (Ki = 4 nM) and elastase (Ki = 4.8 nM). Also inhibits chymotrypsin with a Ki of 22 nM. Does not inhibit bacterial subtilisin. This Hyacinthus orientalis (Common hyacinth) protein is Bowman-Birk type proteinase inhibitor A6.